Reading from the N-terminus, the 116-residue chain is Small ribosomal subunit protein bS18c (116 aa).

Over residues 1-13 (MKPSFRNTSPSFR) the composition is skewed to polar residues. The interval 1 to 51 (MKPSFRNTSPSFRNRSKPYFRNRSKPYFRNRSKPSFRNTSKRFSPNQQSFR) is disordered. Basic residues predominate over residues 14–34 (NRSKPYFRNRSKPYFRNRSKP). Residues 35 to 49 (SFRNTSKRFSPNQQS) show a composition bias toward polar residues.

It belongs to the bacterial ribosomal protein bS18 family. Part of the 30S ribosomal subunit.

It localises to the plastid. Its subcellular location is the chloroplast. The polypeptide is Small ribosomal subunit protein bS18c (Cryptomeria japonica (Japanese cedar)).